The following is a 94-amino-acid chain: Cell division topological specificity factor (94 aa).

It belongs to the MinE family.

Its function is as follows. Prevents the cell division inhibition by proteins MinC and MinD at internal division sites while permitting inhibition at polar sites. This ensures cell division at the proper site by restricting the formation of a division septum at the midpoint of the long axis of the cell. The chain is Cell division topological specificity factor from Synechococcus sp. (strain CC9311).